A 594-amino-acid chain; its full sequence is DNA ligase (594 aa).

Position 256 (glutamate 256) interacts with ATP. Lysine 258 serves as the catalytic N6-AMP-lysine intermediate. Arginine 263, arginine 279, glutamate 309, phenylalanine 349, arginine 426, and lysine 432 together coordinate ATP.

The protein belongs to the ATP-dependent DNA ligase family. Mg(2+) is required as a cofactor.

The catalysed reaction is ATP + (deoxyribonucleotide)n-3'-hydroxyl + 5'-phospho-(deoxyribonucleotide)m = (deoxyribonucleotide)n+m + AMP + diphosphate.. In terms of biological role, DNA ligase that seals nicks in double-stranded DNA during DNA replication, DNA recombination and DNA repair. This chain is DNA ligase, found in Ignicoccus hospitalis (strain KIN4/I / DSM 18386 / JCM 14125).